The following is a 509-amino-acid chain: Lysine--tRNA ligase (509 aa).

Residues 1-18 (MSEQNPTQAAKQAPQQEL) show a composition bias toward polar residues. Positions 1–20 (MSEQNPTQAAKQAPQQELND) are disordered. Mg(2+) is bound by residues E418 and E425.

This sequence belongs to the class-II aminoacyl-tRNA synthetase family. In terms of assembly, homodimer. It depends on Mg(2+) as a cofactor.

The protein localises to the cytoplasm. It carries out the reaction tRNA(Lys) + L-lysine + ATP = L-lysyl-tRNA(Lys) + AMP + diphosphate. The sequence is that of Lysine--tRNA ligase from Psychromonas ingrahamii (strain DSM 17664 / CCUG 51855 / 37).